Reading from the N-terminus, the 303-residue chain is MKLRVATRGSKLSIAQTMIALEAIKRVEPSLEYELVIVKTRGDIHQDKPFTAIGGKGLFEKEVNLAVLEGRADIAVHSLKDVPSAISPGLVLAMTPPRDPPYDVLVVRGGKEKTIWDLPSGAIVGTSSARRVAMLKHVRRDLVFKVLRGNVDTRLRKLEQGQYDAIVLAEAGLKRLGVDIEYWRIPPDILPPAPGQGIIGVYTLSSRSDILPILEKASDQKAMAEARAERAFLAYAGGGCHTPLGAYAELRGNTLYFHAALASPDGSRRVEVRVEGDPDKPTQVGLEAAFELRRLAAREGISL.

Cys-240 carries the post-translational modification S-(dipyrrolylmethanemethyl)cysteine.

This sequence belongs to the HMBS family. It depends on dipyrromethane as a cofactor.

It catalyses the reaction 4 porphobilinogen + H2O = hydroxymethylbilane + 4 NH4(+). The protein operates within porphyrin-containing compound metabolism; protoporphyrin-IX biosynthesis; coproporphyrinogen-III from 5-aminolevulinate: step 2/4. Tetrapolymerization of the monopyrrole PBG into the hydroxymethylbilane pre-uroporphyrinogen in several discrete steps. This chain is Probable porphobilinogen deaminase, found in Hyperthermus butylicus (strain DSM 5456 / JCM 9403 / PLM1-5).